Here is a 1093-residue protein sequence, read N- to C-terminus: Regulatory protein SWI4 (1093 aa).

The 111-residue stretch at 37–147 (IEIATYSETD…FQFDPNNPPP (111 aa)) folds into the HTH APSES-type domain. Residues 71–92 (ITQVFKIAQFSKTKRTKILEKE) constitute a DNA-binding region (H-T-H motif). A disordered region spans residues 138–210 (FQFDPNNPPP…NQPNPSPLQN (73 aa)). The span at 152 to 172 (NSILRKTSPGTKITSPSSYNK) shows a compositional bias: polar residues. The span at 179 to 201 (SSSSTSATTTAANKKGKKNASIN) shows a compositional bias: low complexity. Phosphoserine is present on Ser-255. Residues 448–457 (NSMNMSSRSM) show a composition bias toward low complexity. Residues 448-468 (NSMNMSSRSMTPFSAGNTSSQ) form a disordered region. Polar residues predominate over residues 458 to 468 (TPFSAGNTSSQ). 2 ANK repeats span residues 520-549 (QGHT…NALQ) and 641-670 (IGNT…STDI). The residue at position 806 (Ser-806) is a Phosphoserine. 2 disordered regions span residues 813 to 855 (RSQS…SSLL) and 973 to 1017 (QDEE…DAKF). Over residues 818-837 (SDEKEKAKDNENQVEKKKDP) the composition is skewed to basic and acidic residues. Residues 846–855 (PSLESPSSLL) are compositionally biased toward low complexity. The span at 1000–1010 (KSTSETSSPKN) shows a compositional bias: polar residues.

Component of the transcription complex SCB-binding factor (SBF) composed of SWI6 and SWI4. Interacts with MSA2.

In terms of biological role, part of a complex involved in cell-cycle-dependent transcription. SWI4 and SWI6 are required for formation of the cell-cycle box factor-DNA complex. The repeated element in the upstream region of HO (5'-CACGAAAA-3') is called the cell cycle box (CCB). The chain is Regulatory protein SWI4 (SWI4) from Saccharomyces cerevisiae (strain ATCC 204508 / S288c) (Baker's yeast).